Here is a 292-residue protein sequence, read N- to C-terminus: Glycine--tRNA ligase alpha subunit (292 aa).

It belongs to the class-II aminoacyl-tRNA synthetase family. Tetramer of two alpha and two beta subunits.

The protein resides in the cytoplasm. It catalyses the reaction tRNA(Gly) + glycine + ATP = glycyl-tRNA(Gly) + AMP + diphosphate. This chain is Glycine--tRNA ligase alpha subunit, found in Synechococcus sp. (strain ATCC 27144 / PCC 6301 / SAUG 1402/1) (Anacystis nidulans).